A 347-amino-acid polypeptide reads, in one-letter code: NADH-ubiquinone oxidoreductase chain 2 (347 aa).

The next 9 membrane-spanning stretches (helical) occupy residues 3–23, 59–79, 93–115, 150–170, 178–198, 199–219, 242–262, 274–294, and 326–346; these read PLAL…TMMS, YFMT…INLM, VASN…HFWV, NTNL…WGGL, ILAY…PFNP, TLTL…FMIL, IMLM…GFMP, NSII…YFYM, and LPTL…ISML.

It belongs to the complex I subunit 2 family. As to quaternary structure, core subunit of respiratory chain NADH dehydrogenase (Complex I) which is composed of 45 different subunits. Interacts with TMEM242.

It localises to the mitochondrion inner membrane. It carries out the reaction a ubiquinone + NADH + 5 H(+)(in) = a ubiquinol + NAD(+) + 4 H(+)(out). Its function is as follows. Core subunit of the mitochondrial membrane respiratory chain NADH dehydrogenase (Complex I) which catalyzes electron transfer from NADH through the respiratory chain, using ubiquinone as an electron acceptor. Essential for the catalytic activity and assembly of complex I. In Loxodonta africana (African elephant), this protein is NADH-ubiquinone oxidoreductase chain 2.